We begin with the raw amino-acid sequence, 537 residues long: Lariat debranching enzyme (537 aa).

Residues Cys-8, His-10, Asp-39, and Asn-84 each contribute to the a divalent metal cation site. The interval 124 to 154 (SGIYKGHDFLRGHHEFPPYTESTCRSVYHVR) is lariat recognition loop. Residues His-174, His-226, and His-228 each coordinate a divalent metal cation. Disordered stretches follow at residues 242 to 272 (KAPTKMGDGSSSSSSSSSSESDDEESTSRLP) and 473 to 537 (TAAE…EDDD). Over residues 251–260 (SSSSSSSSSS) the composition is skewed to low complexity.

Belongs to the lariat debranching enzyme family. The cofactor is Fe(2+). Zn(2+) is required as a cofactor. Requires Mn(2+) as cofactor.

The protein resides in the nucleus. With respect to regulation, active in presence of diverse metals including Fe(2+), Zn(2+), Mn(2+). Binds two metal cations in two adjacent alpha and beta metal-binding pockets. Its function is as follows. Cleaves the 2'-5' phosphodiester linkage at the branch point of lariat intron pre-mRNAs after splicing and converts them into linear molecules that are subsequently degraded. It thereby facilitates ribonucleotide turnover. The chain is Lariat debranching enzyme (DBR1) from Drosophila pseudoobscura pseudoobscura (Fruit fly).